The primary structure comprises 703 residues: Polyribonucleotide nucleotidyltransferase (703 aa).

Positions 484 and 490 each coordinate Mg(2+). The KH domain occupies 551-610 (PTVTTLRVLPEKISVIIGPAGKNIKKIIEETGVKIDLDPTGLVKIYATSKIAAEKAIDMI). The S1 motif domain occupies 620–688 (GEVYLGKVTR…DQGRIKVSLK (69 aa)).

This sequence belongs to the polyribonucleotide nucleotidyltransferase family. Mg(2+) serves as cofactor.

Its subcellular location is the cytoplasm. It carries out the reaction RNA(n+1) + phosphate = RNA(n) + a ribonucleoside 5'-diphosphate. Involved in mRNA degradation. Catalyzes the phosphorolysis of single-stranded polyribonucleotides processively in the 3'- to 5'-direction. The protein is Polyribonucleotide nucleotidyltransferase of Sulfurihydrogenibium sp. (strain YO3AOP1).